The following is a 101-amino-acid chain: Conantokin-L (101 aa).

Positions Met-1 to Gly-21 are cleaved as a signal peptide. A propeptide spanning residues Thr-22–Arg-80 is cleaved from the precursor. A 4-carboxyglutamate mark is found at Glu-83, Glu-84, Glu-91, and Glu-95. Positions 91 and 95 each coordinate a divalent metal cation. An Asparagine amide modification is found at Asn-99.

The protein belongs to the conotoxin B superfamily. Ca(2+) serves as cofactor. Requires Mg(2+) as cofactor. As to expression, expressed by the venom duct.

It localises to the secreted. Conantokins inhibit N-methyl-D-aspartate (NMDA) receptors. This toxin is far less potent as an anticonvulsant compound than conantokin-R. It induces sleep-like symptoms in mice. The polypeptide is Conantokin-L (Conus lynceus (Lynceus cone)).